The primary structure comprises 233 residues: UPF0758 protein SRU_2338 (233 aa).

Residues 110 to 232 (QVTCPADVAD…HTSLAERGVI (123 aa)) enclose the MPN domain. Zn(2+)-binding residues include H181, H183, and D194. Positions 181-194 (HNHPSGNPEPSRED) match the JAMM motif motif.

This sequence belongs to the UPF0758 family.

The chain is UPF0758 protein SRU_2338 from Salinibacter ruber (strain DSM 13855 / M31).